The chain runs to 347 residues: Palmitoyltransferase ZDHHC11 (347 aa).

The Cytoplasmic portion of the chain corresponds to 1-46 (MKEMNICGINKNWVLPEAQENNVKKFLPRPLSRVNGWSPPLHSFQA). A helical membrane pass occupies residues 47–67 (ISWITYLAMSIVTFGIFIPFL). At 68–75 (PYSWKYAA) the chain is on the lumenal side. The helical transmembrane segment at 76–96 (NIVMGGVFIFHLIVHLIAITI) threads the bilayer. Topologically, residues 97 to 170 (DPADTNVRLK…LNNCVGRRNY (74 aa)) are cytoplasmic. The DHHC domain occupies 128–178 (QYCHLCEVTASKKAKHCSACNKCVSGFDHHCKWLNNCVGRRNYWFFFWSVA). The active-site S-palmitoyl cysteine intermediate is Cys158. Residues 171–191 (WFFFWSVASAAVGILGVMIIL) form a helical membrane-spanning segment. Topologically, residues 192–234 (CYICIQYFVNPDELRTDPLYKEIISENTWLLFLSLWPVPVKTP) are lumenal. The chain crosses the membrane as a helical span at residues 235-255 (IVLSIAVMALLLAIASFVMLG). At 256 to 347 (HLLIFHLYLI…SPPKICHSED (92 aa)) the chain is on the cytoplasmic side. Residues 291–306 (ELPLQKKGDLPQEKSD) show a composition bias toward basic and acidic residues. The segment at 291 to 332 (ELPLQKKGDLPQEKSDNWAWPKSPPRVGSQKFPVSTLSPKSS) is disordered. Residues 322-331 (FPVSTLSPKS) are compositionally biased toward polar residues.

The protein belongs to the DHHC palmitoyltransferase family. Interacts with IRF3 and STING1; in presence of DNA viruses recruits IRF3 to STING1 promoting IRF3 phosphorylation and activation.

It localises to the endosome membrane. It catalyses the reaction L-cysteinyl-[protein] + hexadecanoyl-CoA = S-hexadecanoyl-L-cysteinyl-[protein] + CoA. In terms of biological role, endoplasmic reticulum-localized palmitoyltransferase that could catalyze the addition of palmitate onto various protein substrates and be involved in a variety of cellular processes. Has a palmitoyltransferase activity toward NCDN and regulates NCDN association with endosome membranes through this palmitoylation. May play a role in cell proliferation. Its function is as follows. Also has a palmitoyltransferase activity-independent function in DNA virus-triggered and CGAS-mediated innate immune response. Functions as an adapter that recruits IRF3 to STING1 to promote the activation of that key transcriptional regulator of type I interferon (IFN)-dependent immune response. The polypeptide is Palmitoyltransferase ZDHHC11 (Mus musculus (Mouse)).